We begin with the raw amino-acid sequence, 99 residues long: UPF0235 protein AHA_3661 (99 aa).

This sequence belongs to the UPF0235 family.

The protein is UPF0235 protein AHA_3661 of Aeromonas hydrophila subsp. hydrophila (strain ATCC 7966 / DSM 30187 / BCRC 13018 / CCUG 14551 / JCM 1027 / KCTC 2358 / NCIMB 9240 / NCTC 8049).